A 290-amino-acid polypeptide reads, in one-letter code: Bifunctional protein FolD (290 aa).

Residues 169–171 (GAS), I194, and I235 contribute to the NADP(+) site.

This sequence belongs to the tetrahydrofolate dehydrogenase/cyclohydrolase family. As to quaternary structure, homodimer.

It catalyses the reaction (6R)-5,10-methylene-5,6,7,8-tetrahydrofolate + NADP(+) = (6R)-5,10-methenyltetrahydrofolate + NADPH. The enzyme catalyses (6R)-5,10-methenyltetrahydrofolate + H2O = (6R)-10-formyltetrahydrofolate + H(+). Its pathway is one-carbon metabolism; tetrahydrofolate interconversion. Catalyzes the oxidation of 5,10-methylenetetrahydrofolate to 5,10-methenyltetrahydrofolate and then the hydrolysis of 5,10-methenyltetrahydrofolate to 10-formyltetrahydrofolate. The protein is Bifunctional protein FolD of Helicobacter pylori (strain J99 / ATCC 700824) (Campylobacter pylori J99).